A 167-amino-acid polypeptide reads, in one-letter code: Mitochondrial fission 1 protein B (167 aa).

One copy of the TPR repeat lies at Arg92–Ser125. The chain crosses the membrane as a helical span at residues Val144–Ile164.

Belongs to the FIS1 family. Interacts with PEX11A, PEX11B, PEX11C, PEX11D and PEX11E.

Its subcellular location is the mitochondrion outer membrane. The protein localises to the peroxisome membrane. Component of the peroxisomal and mitochondrial division machineries. Plays a role in promoting the fission of mitochondria and peroxisomes. In association with PEX11C, PEX11D, PEX11E and DRP3A, is involved in cell cycle-associated constitutive self-replication of preexisting peroxisomes. The chain is Mitochondrial fission 1 protein B (FIS1B) from Arabidopsis thaliana (Mouse-ear cress).